A 424-amino-acid polypeptide reads, in one-letter code: UPF0761 membrane protein Smlt0865 (424 aa).

Transmembrane regions (helical) follow at residues 48 to 68 (VFAL…FPVF), 101 to 121 (SAGQ…LITL), 144 to 164 (FLVY…SLAV), 181 to 201 (WLAE…CITL), 216 to 236 (AVPG…GIGA), and 251 to 271 (VAFV…VLLG).

The protein belongs to the UPF0761 family.

It localises to the cell inner membrane. The sequence is that of UPF0761 membrane protein Smlt0865 from Stenotrophomonas maltophilia (strain K279a).